Here is a 391-residue protein sequence, read N- to C-terminus: 3-ketoacyl-CoA thiolase (391 aa).

Cys-95 acts as the Acyl-thioester intermediate in catalysis. Residues His-347 and Cys-377 each act as proton acceptor in the active site.

Belongs to the thiolase-like superfamily. Thiolase family. Heterotetramer of two alpha chains (FadB) and two beta chains (FadA).

It is found in the cytoplasm. It catalyses the reaction an acyl-CoA + acetyl-CoA = a 3-oxoacyl-CoA + CoA. It participates in lipid metabolism; fatty acid beta-oxidation. Functionally, catalyzes the final step of fatty acid oxidation in which acetyl-CoA is released and the CoA ester of a fatty acid two carbons shorter is formed. The chain is 3-ketoacyl-CoA thiolase from Pseudomonas entomophila (strain L48).